The chain runs to 70 residues: Large ribosomal subunit protein uL29 (70 aa).

This sequence belongs to the universal ribosomal protein uL29 family.

This Symbiobacterium thermophilum (strain DSM 24528 / JCM 14929 / IAM 14863 / T) protein is Large ribosomal subunit protein uL29.